Reading from the N-terminus, the 196-residue chain is MNEAVSPGALSTLFTDARTHNGWRETPVSDETLREIYALMKWGPTSANCSPARIVFIRTAEGKERLRPALSSGNLQKTLTAPVTAIVAWDSEFYERLPQLFPHGDARSWFTSSPQLAEETAFRNSSMQAAYLIVACRALGLDTGPMSGFDRQHVDDAFFAGSTLKSNLLINIGYGDSSKLFARLPRLSFEEACGLL.

It belongs to the nitroreductase family. HadB/RutE subfamily. Requires FMN as cofactor.

The enzyme catalyses 3-hydroxypropanoate + NADP(+) = 3-oxopropanoate + NADPH + H(+). May reduce toxic product malonic semialdehyde to 3-hydroxypropionic acid, which is excreted. The chain is Probable malonic semialdehyde reductase RutE from Escherichia coli O8 (strain IAI1).